The chain runs to 229 residues: Large ribosomal subunit protein bL25 (229 aa).

Disordered regions lie at residues 1–21 (MSDA…GASR) and 187–229 (PSAL…KGDD). Acidic residues predominate over residues 196-207 (SEEEEDGEEVDA).

The protein belongs to the bacterial ribosomal protein bL25 family. CTC subfamily. In terms of assembly, part of the 50S ribosomal subunit; part of the 5S rRNA/L5/L18/L25 subcomplex. Contacts the 5S rRNA. Binds to the 5S rRNA independently of L5 and L18.

Its function is as follows. This is one of the proteins that binds to the 5S RNA in the ribosome where it forms part of the central protuberance. This Erythrobacter litoralis (strain HTCC2594) protein is Large ribosomal subunit protein bL25.